The primary structure comprises 357 residues: DNA replication and repair protein RecF (357 aa).

30–37 (GANGSGKT) is an ATP binding site.

The protein belongs to the RecF family.

It is found in the cytoplasm. In terms of biological role, the RecF protein is involved in DNA metabolism; it is required for DNA replication and normal SOS inducibility. RecF binds preferentially to single-stranded, linear DNA. It also seems to bind ATP. The protein is DNA replication and repair protein RecF of Salmonella paratyphi A (strain ATCC 9150 / SARB42).